We begin with the raw amino-acid sequence, 944 residues long: Neutral alpha-glucosidase AB (944 aa).

The first 28 residues, 1–28 (MAAVAAVAARRRRSWASLVLAFLGVCLG), serve as a signal peptide directing secretion. Cysteines 41 and 47 form a disulfide. Ser52 is subject to Phosphoserine. Asn97 carries N-linked (GlcNAc...) asparagine glycosylation. Residues 181 to 238 (QRAPRVSQGSKDPAEGDGAQPEETPRDGDKPEETQGKAEKDEPGAWEETFKTHSDSKP) form a disordered region. Positions 203-236 (ETPRDGDKPEETQGKAEKDEPGAWEETFKTHSDS) are enriched in basic and acidic residues. Positions 283 and 429 each coordinate substrate. Residue Asp542 is the Nucleophile of the active site. A substrate-binding site is contributed by Arg602. The active-site Proton donor is Asp618. The cysteines at positions 633 and 644 are disulfide-linked. His676 lines the substrate pocket.

The protein belongs to the glycosyl hydrolase 31 family. Heterodimer of a catalytic alpha subunit (GANAB) and a beta subunit (PRKCSH). Binds glycosylated PTPRC. In terms of tissue distribution, detected in placenta. Isoform 1 and isoform 2 are expressed in the kidney and liver.

The protein resides in the endoplasmic reticulum. It is found in the golgi apparatus. The protein localises to the melanosome. It catalyses the reaction N(4)-(alpha-D-Glc-(1-&gt;3)-alpha-D-Man-(1-&gt;2)-alpha-D-Man-(1-&gt;2)-alpha-D-Man-(1-&gt;3)-[alpha-D-Man-(1-&gt;2)-alpha-D-Man-(1-&gt;3)-[alpha-D-Man-(1-&gt;2)-alpha-D-Man-(1-&gt;6)]-alpha-D-Man-(1-&gt;6)]-beta-D-Man-(1-&gt;4)-beta-D-GlcNAc-(1-&gt;4)-beta-D-GlcNAc)-L-asparaginyl-[protein] + H2O = N(4)-(alpha-D-Man-(1-&gt;2)-alpha-D-Man-(1-&gt;2)-alpha-D-Man-(1-&gt;3)-[alpha-D-Man-(1-&gt;2)-alpha-D-Man-(1-&gt;3)-[alpha-D-Man-(1-&gt;2)-alpha-D-Man-(1-&gt;6)]-alpha-D-Man-(1-&gt;6)]-beta-D-Man-(1-&gt;4)-beta-D-GlcNAc-(1-&gt;4)-beta-D-GlcNAc)-L-asparaginyl-[protein] (N-glucan mannose isomer 9A1,2,3B1,2,3) + beta-D-glucose. The enzyme catalyses N(4)-(alpha-D-Glc-(1-&gt;3)-alpha-D-Glc-(1-&gt;3)-alpha-D-Man-(1-&gt;2)-alpha-D-Man-(1-&gt;2)-alpha-D-Man-(1-&gt;3)-[alpha-D-Man-(1-&gt;2)-alpha-D-Man-(1-&gt;3)-[alpha-D-Man-(1-&gt;2)-alpha-D-Man-(1-&gt;6)]-alpha-D-Man-(1-&gt;6)]-beta-D-Man-(1-&gt;4)-beta-D-GlcNAc-(1-&gt;4)-beta-D-GlcNAc)-L-asparaginyl-[protein] + H2O = N(4)-(alpha-D-Glc-(1-&gt;3)-alpha-D-Man-(1-&gt;2)-alpha-D-Man-(1-&gt;2)-alpha-D-Man-(1-&gt;3)-[alpha-D-Man-(1-&gt;2)-alpha-D-Man-(1-&gt;3)-[alpha-D-Man-(1-&gt;2)-alpha-D-Man-(1-&gt;6)]-alpha-D-Man-(1-&gt;6)]-beta-D-Man-(1-&gt;4)-beta-D-GlcNAc-(1-&gt;4)-beta-D-GlcNAc)-L-asparaginyl-[protein] + beta-D-glucose. It participates in glycan metabolism; N-glycan metabolism. Its activity is regulated as follows. Inhibited by deoxynojirimycin. Its function is as follows. Catalytic subunit of glucosidase II that cleaves sequentially the 2 innermost alpha-1,3-linked glucose residues from the Glc(2)Man(9)GlcNAc(2) oligosaccharide precursor of immature glycoproteins. Required for PKD1/Polycystin-1 and PKD2/Polycystin-2 maturation and localization to the cell surface and cilia. This chain is Neutral alpha-glucosidase AB, found in Homo sapiens (Human).